We begin with the raw amino-acid sequence, 227 residues long: UPF0173 metal-dependent hydrolase BT9727_4343 (227 aa).

The protein belongs to the UPF0173 family.

The chain is UPF0173 metal-dependent hydrolase BT9727_4343 from Bacillus thuringiensis subsp. konkukian (strain 97-27).